Consider the following 271-residue polypeptide: Zinc-finger homeodomain protein 8 (271 aa).

At Ser-16 the chain carries Phosphoserine. The ZF-HD dimerization-type; degenerate zinc finger occupies 56 to 107 (YKECLKNHAAGIGGHALDGCGEFMPSPSFNSNDPASLTCAACGCHRNFHRRE). The segment at 125–154 (HNRHQLPPPPPPHLAGIRSPDDDDSASPPP) is disordered. A DNA-binding region (homeobox) is located at residues 179 to 242 (RKRFRTKFSQ…NNKISGRSGA (64 aa)).

Homo- and heterodimer with other ZFHD proteins. Interacts with MIF1, MIF2 and MIF3; these interactions prevent nuclear localization and DNA-binding to inhibit transcription regulation activity. Binds to ZHD1, ZHD2, ZHD4, ZHD10 and ZHD11. Interacts with HIPP30. In terms of tissue distribution, mostly expressed in flowers and inflorescence.

It localises to the nucleus. Functionally, putative transcription factor. The polypeptide is Zinc-finger homeodomain protein 8 (ZHD8) (Arabidopsis thaliana (Mouse-ear cress)).